The sequence spans 205 residues: MSVKVASPFSPDGVQCLPKLFTISAPAGAGKTTLVHMLQEEFPSAFEKTVSSTTRSPRPGEVHGVDYVFMSEDEFKDVLDKDGFLEWVFLFGTYYGTSKEGISRILQKGKHCIAVIDVQGALTLKKQMQTVAIFIQAPSQEELERRLNTRDSEKDLQKKERLEHSNVEIAAASQFDYVVVNDDLTTAYQVLRSIFIAEEHRMSHG.

The Guanylate kinase-like domain occupies 18-196 (PKLFTISAPA…AYQVLRSIFI (179 aa)). ATP is bound at residue 25 to 32 (APAGAGKT).

Belongs to the guanylate kinase family.

Its subcellular location is the cytoplasm. The catalysed reaction is GMP + ATP = GDP + ADP. Its function is as follows. Essential for recycling GMP and indirectly, cGMP. The chain is Guanylate kinase (gmk) from Chlamydia muridarum (strain MoPn / Nigg).